The chain runs to 884 residues: MGDAEDFCPHLDSIGEVTKEDLILKSKGTCESCGVGGPNLWACLQDGCQSVGCGESYVDHSTLHAQAKKHNLTVNLTTFRVWCYACEKEVFLDPRGPPASQTTSPRLSHRDFPTSAHPLKSVPIAVGDDGESESDEDDIKPRGLTGMKNIGNSCYMNAALQALSNCPPLTQFFLECGGLVRTDKKPALCKSYQKLISELWHKKRPSYVVPSSLYHGIKLINPLFRGYSQQDTQEFLRCLMDQLHEELKEPVPLETQEREEEDRDDQREGERGGTVEEDFLSCDSGGEMGDGEGGGGVGTLSEMELLIREEVGRGLSEKEKLKERKLSYCHRRTSSEQADEDADVDTAMIPEPDNDAYVHCSSRSCSPHPVESISKHSSTPPRSSPLRTSHSYVLKKAQVLSGGKKRSEVRYRSVISDIFDGSILSLVQCLTCDRVSTTIETFQDLSLPIPGKEDLAKLHSTIHQSAVSKAGTCGDSYAAQGWLSFFMDYIRRFVVSCIPSWFWGPMITLEDCLAAFFAADELKGDNMYSCERCKKLRNGVKYCKVLRLPEILCIHLKRFRHEVMYSFKIGSHVSFPLEGLNLRPFLAKECVSRITTYDLLAVICHHGSASSGHYISYCQNVINGQWYEFDDQYVTEVHETVVQNAEAYVLFYRKSSEEAERERQKVVSLAAMKESGLLQFYISREWLNKFNTFAEPGPISNQSFLCSHGGIPPNKYHYIDDLVVILPQSVWEYLYNRFGGGPAVNHLYVCSICQVEIEALAKRRKTEIDTFIKLNKAFQAEEAPSVIYCISMQWFREWEAFVKAKDSDPPGPIDNSKVALTKSSGQVQLKQGADYGQISEETWNYLLNVYGGGPEIAIRQTVAQYQEAEHLHGEQKIEAETRAG.

The segment at 6–109 (DFCPHLDSIG…SQTTSPRLSH (104 aa)) adopts a UBP-type zinc-finger fold. Zn(2+) contacts are provided by cysteine 8, histidine 10, cysteine 30, cysteine 33, cysteine 43, cysteine 48, cysteine 53, histidine 60, histidine 64, histidine 70, cysteine 83, and cysteine 86. The disordered stretch occupies residues 95–142 (RGPPASQTTSPRLSHRDFPTSAHPLKSVPIAVGDDGESESDEDDIKPR). Residues 128 to 138 (DDGESESDEDD) show a composition bias toward acidic residues. In terms of domain architecture, USP spans 145–655 (TGMKNIGNSC…EAYVLFYRKS (511 aa)). Residue cysteine 154 is the Nucleophile of the active site. Disordered stretches follow at residues 247–296 (LKEP…GGGG) and 368–388 (HPVE…PLRT). Basic and acidic residues predominate over residues 264–274 (DDQREGERGGT). Gly residues predominate over residues 286–296 (GEMGDGEGGGG). Residues 376-388 (HSSTPPRSSPLRT) are compositionally biased toward low complexity. Residue histidine 613 is the Proton acceptor of the active site. 2 DUSP domains span residues 657–750 (EEAE…LYVC) and 759–862 (ALAK…RQTV).

Belongs to the peptidase C19 family. USP20/USP33 subfamily.

It is found in the cytoplasm. It localises to the perinuclear region. The protein localises to the cytoskeleton. The protein resides in the microtubule organizing center. Its subcellular location is the centrosome. It carries out the reaction Thiol-dependent hydrolysis of ester, thioester, amide, peptide and isopeptide bonds formed by the C-terminal Gly of ubiquitin (a 76-residue protein attached to proteins as an intracellular targeting signal).. In terms of biological role, deubiquitinating enzyme involved in beta-2 adrenergic receptor (adrb2) recycling. Acts as a regulator of G-protein coupled receptor (GPCR) signaling by mediating the deubiquitination beta-2 adrenergic receptor (adrb2). Plays a central role in adrb2 recycling and resensitization after prolonged agonist stimulation by constitutively binding adrb2, mediating deubiquitination of adrb2 and inhibiting lysosomal trafficking of adrb2. Mediates deubiquitination of both 'Lys-48'- and 'Lys-63'-linked polyubiquitin chains. The sequence is that of Ubiquitin carboxyl-terminal hydrolase 20 (usp20) from Xenopus tropicalis (Western clawed frog).